The chain runs to 234 residues: Peroxiredoxin (234 aa).

Positions Pro-6 to Val-161 constitute a Thioredoxin domain. Cys-48 serves as the catalytic Cysteine sulfenic acid (-SOH) intermediate. A substrate-binding site is contributed by Arg-124. Cys-203 and Cys-209 are joined by a disulfide.

It belongs to the peroxiredoxin family. Prx6 subfamily. Homodecamer. Pentamer of dimers that assemble into a ring structure.

The protein localises to the cytoplasm. It catalyses the reaction a hydroperoxide + [thioredoxin]-dithiol = an alcohol + [thioredoxin]-disulfide + H2O. In terms of biological role, thiol-specific peroxidase that catalyzes the reduction of hydrogen peroxide and organic hydroperoxides to water and alcohols, respectively. Plays a role in cell protection against oxidative stress by detoxifying peroxides. The protein is Peroxiredoxin of Ignicoccus hospitalis (strain KIN4/I / DSM 18386 / JCM 14125).